Here is an 883-residue protein sequence, read N- to C-terminus: Chromatin structure-remodeling complex protein RSC30 (883 aa).

Residues 14-45 constitute a DNA-binding region (zn(2)-C6 fungal-type); the sequence is ACTQCRKRKIGCDRAKPICGNCVKYNKPDCFY. Disordered stretches follow at residues 121–157 and 241–273; these read QNNNTNNNTAPRQNSSTVSSNVHGNTIVRSDSPDVPS and NTTANKINKTGENSKKGKVDGKRAGFDHQTSRT. The segment covering 130 to 149 has biased composition (polar residues); the sequence is APRQNSSTVSSNVHGNTIVR. Ser-150 carries the post-translational modification Phosphoserine. Polar residues predominate over residues 241 to 251; that stretch reads NTTANKINKTG. Over residues 252 to 270 the composition is skewed to basic and acidic residues; sequence ENSKKGKVDGKRAGFDHQT.

In terms of assembly, forms a heteromer with RSC3. Interacts with NPL6. Component of the two forms of the RSC complex composed of at least either RSC1 or RSC2, and ARP7, ARP9, LDB7, NPL6, RSC3, RSC30, RSC4, RSC58, RSC6, RSC8, RSC9, SFH1, STH1, HTL1 and probably RTT102. The complexes interact with histone and histone variant components of centromeric chromatin. Component of a fungal-specific module (HTL1-LDB7-NPL6-RSC3-RSC30) within the RSC complex.

The protein localises to the nucleus. In terms of biological role, component of the chromatin structure-remodeling complex (RSC), which is involved in transcription regulation and nucleosome positioning. RSC is responsible for the transfer of a histone octamer from a nucleosome core particle to naked DNA. The reaction requires ATP and involves an activated RSC-nucleosome intermediate. Remodeling reaction also involves DNA translocation, DNA twist and conformational change. As a reconfigurer of centromeric and flanking nucleosomes, RSC complex is required both for proper kinetochore function in chromosome segregation and, via a PKC1-dependent signaling pathway, for organization of the cellular cytoskeleton. This subunit is required for transcription of ribosomal protein genes and genes involved in the integrity of the cell wall. Together with HTL1, LDB7, NPL6, RSC3 components, defines a fungal-specific module within the RSC complex that plays a role in many cellular functions including the maintenance of cell wall integrity. The sequence is that of Chromatin structure-remodeling complex protein RSC30 (RSC30) from Saccharomyces cerevisiae (strain ATCC 204508 / S288c) (Baker's yeast).